A 78-amino-acid polypeptide reads, in one-letter code: Large ribosomal subunit protein bL28 (78 aa).

This sequence belongs to the bacterial ribosomal protein bL28 family.

The sequence is that of Large ribosomal subunit protein bL28 from Dichelobacter nodosus (strain VCS1703A).